Consider the following 82-residue polypeptide: MPSAPHYSSKYYDDKYEYRHVILPSEISSLIPRDVLLTEDECRKLGIRQSDGWEHYANHKPEPHILLFRRPHSGIPNDVDYL.

Belongs to the CKS family. As to quaternary structure, forms a homohexamer that can probably bind six kinase subunits.

In terms of biological role, binds to the catalytic subunit of the cyclin dependent kinases and is essential for their biological function. The sequence is that of Cyclin-dependent kinases regulatory subunit (cks1) from Dictyostelium discoideum (Social amoeba).